Consider the following 200-residue polypeptide: Cysteine dioxygenase type 1 (200 aa).

3 residues coordinate Fe cation: histidine 86, histidine 88, and histidine 140. A cross-link (3'-(S-cysteinyl)-tyrosine (Cys-Tyr)) is located at residues 93–157; that stretch reads CFLKMLQGNL…TEPAVSLHLY (65 aa).

The protein belongs to the cysteine dioxygenase family. As to quaternary structure, monomer. Fe cation is required as a cofactor. Ni(2+) serves as cofactor. Requires Zn(2+) as cofactor. In terms of processing, the thioether cross-link between Cys-93 and Tyr-157 plays a structural role through stabilizing the Fe(2+) ion, and prevents the production of highly damaging free hydroxyl radicals by holding the oxygen radical via hydroxyl hydrogen.

It catalyses the reaction L-cysteine + O2 = 3-sulfino-L-alanine + H(+). Its pathway is organosulfur biosynthesis; taurine biosynthesis; hypotaurine from L-cysteine: step 1/2. Its function is as follows. Catalyzes the oxidation of cysteine to cysteine sulfinic acid with addition of molecular dioxygen. The sequence is that of Cysteine dioxygenase type 1 (CDO1) from Bos taurus (Bovine).